A 106-amino-acid chain; its full sequence is UPF0145 protein TM_0763 (106 aa).

This sequence belongs to the UPF0145 family.

In Thermotoga maritima (strain ATCC 43589 / DSM 3109 / JCM 10099 / NBRC 100826 / MSB8), this protein is UPF0145 protein TM_0763.